Reading from the N-terminus, the 595-residue chain is NADH-quinone oxidoreductase subunit C/D (595 aa).

The tract at residues M1–Q185 is NADH dehydrogenase I subunit C. Residues D209–R595 form an NADH dehydrogenase I subunit D region.

This sequence in the N-terminal section; belongs to the complex I 30 kDa subunit family. In the C-terminal section; belongs to the complex I 49 kDa subunit family. NDH-1 is composed of 13 different subunits. Subunits NuoB, CD, E, F, and G constitute the peripheral sector of the complex.

The protein localises to the cell inner membrane. It carries out the reaction a quinone + NADH + 5 H(+)(in) = a quinol + NAD(+) + 4 H(+)(out). In terms of biological role, NDH-1 shuttles electrons from NADH, via FMN and iron-sulfur (Fe-S) centers, to quinones in the respiratory chain. The immediate electron acceptor for the enzyme in this species is believed to be ubiquinone. Couples the redox reaction to proton translocation (for every two electrons transferred, four hydrogen ions are translocated across the cytoplasmic membrane), and thus conserves the redox energy in a proton gradient. The polypeptide is NADH-quinone oxidoreductase subunit C/D (Enterobacter sp. (strain 638)).